The sequence spans 476 residues: Protein transport protein Sec61 subunit alpha-like 2 (476 aa).

Over 2-33 the chain is Cytoplasmic; that stretch reads AIKFLEVIKPFCAVLPEIQKPERRIQFKEKVL. A helical transmembrane segment spans residues 34–53; sequence WTAITLFIFLVCCQIPLFGI. Over 54–76 the chain is Lumenal; sequence MSSDSADPFYWMRVIMASNRGTL. The helical transmembrane segment at 77–96 threads the bilayer; it reads MELGISPIVTSGLIMQLLAG. Residues 97 to 117 are Cytoplasmic-facing; that stretch reads AKIIEVGDTPKDRALFNGAQK. A helical membrane pass occupies residues 118-138; that stretch reads LFGMIITIGQAVVYVMTGMYG. Residues 139 to 144 are Lumenal-facing; it reads DPSEMG. A helical membrane pass occupies residues 145 to 165; the sequence is AGICLLIIIQLFVAGLIVLLL. Topologically, residues 166–172 are cytoplasmic; sequence DELLQKG. The chain crosses the membrane as a helical span at residues 173–193; sequence YGLGSGISLFIATNICETIVW. Residues 194–240 are Lumenal-facing; that stretch reads KAFSPTTVNTGRGTEFEGAIIALFHLLATRTDKVRALREAFYRQNLP. Residues 241–261 traverse the membrane as a helical segment; the sequence is NLMNLIATIFVFAVVIYFQGF. The Cytoplasmic portion of the chain corresponds to 262-288; sequence RVDLPIKSARYRGQYNTYPIKLFYTSN. The helical transmembrane segment at 289 to 309 threads the bilayer; that stretch reads IPIILQSALVSNLYVISQMLS. The Lumenal segment spans residues 310-354; the sequence is TRFSGNFLVNLLGTWSDTSTGGPARAYPVGGLCYYLSPPESFGTV. Residues 355 to 375 form a helical membrane-spanning segment; it reads LEDPIHAIIYIIFMLGSCAFF. Residues 376–420 are Cytoplasmic-facing; sequence SKTWIEVSGSSAKDVAKQLKEQQMVMRGHRETSMVHELNRYIPTA. A helical membrane pass occupies residues 421 to 441; it reads AAFGGLCIGGLSVMADFLGAI. Over 442 to 445 the chain is Lumenal; it reads GSGT. Residues 446–462 form a helical membrane-spanning segment; the sequence is GILLAVTIIYQYFEIFV. The Cytoplasmic portion of the chain corresponds to 463–476; sequence KEQSEVGSVGALLF.

The protein belongs to the SecY/SEC61-alpha family. As to quaternary structure, the SEC61 channel-forming translocon complex consists of channel-forming core components SEC61A1, SEC61B and SEC61G and different auxiliary components such as SEC62 and SEC63.

The protein resides in the endoplasmic reticulum membrane. In terms of biological role, component of SEC61 channel-forming translocon complex that mediates transport of signal peptide-containing precursor polypeptides across the endoplasmic reticulum (ER). Forms a ribosome receptor and a gated pore in the ER membrane, both functions required for cotranslational translocation of nascent polypeptides. This is Protein transport protein Sec61 subunit alpha-like 2 (sec61al2) from Danio rerio (Zebrafish).